A 315-amino-acid polypeptide reads, in one-letter code: Olfactory receptor 8J3 (315 aa).

The Extracellular portion of the chain corresponds to 1-25 (MAPENFTRVTEFILTGVSSCPELQI). A glycan (N-linked (GlcNAc...) asparagine) is linked at asparagine 5. A helical transmembrane segment spans residues 26–46 (PLFLVFLVLYVLTMAGNLGII). Topologically, residues 47–54 (TLTSVDSR) are cytoplasmic. Residues 55–75 (LQNPMYFFLRHLAIINLGNST) form a helical membrane-spanning segment. At 76–99 (VIAPKMLMNFLVKKKTTSFYECAT) the chain is on the extracellular side. Cysteine 97 and cysteine 189 are disulfide-bonded. A helical membrane pass occupies residues 100–120 (QLGGFLFFIVSEVMMLAVMAY). At 121-139 (DRYVAICNPLLYMVVVSRR) the chain is on the cytoplasmic side. A helical transmembrane segment spans residues 140 to 160 (LCLLLVSLTYLYGFSTAIVVS). Residues 161 to 197 (PCIFSVSYCSSNIINHFYCDIAPLLALSCSDTYIPET) are Extracellular-facing. Residues 198–217 (IVFISAATNLVFSMITVLVS) form a helical membrane-spanning segment. At 218–237 (YFNIVLSILRIRSPEGRKKA) the chain is on the cytoplasmic side. Residues 238-258 (FSTCASHMIAVTVFYGTMLFM) traverse the membrane as a helical segment. The Extracellular portion of the chain corresponds to 259–271 (YLQPQTNHSLDTD). Residue asparagine 265 is glycosylated (N-linked (GlcNAc...) asparagine). The helical transmembrane segment at 272–292 (KMASVFYTLVIPMLNPLIYSL) threads the bilayer. At 293–315 (RNNDVNVALKKFMENPCYSFKSM) the chain is on the cytoplasmic side.

This sequence belongs to the G-protein coupled receptor 1 family.

The protein resides in the cell membrane. Odorant receptor. The protein is Olfactory receptor 8J3 (OR8J3) of Homo sapiens (Human).